Consider the following 242-residue polypeptide: uncharacterized protein (242 aa).

This is an uncharacterized protein from Agrobacterium vitis (Rhizobium vitis).